A 188-amino-acid chain; its full sequence is 3-deoxy-D-manno-octulosonate 8-phosphate phosphatase KdsC (188 aa).

Mg(2+) contacts are provided by D32 and D34. Substrate-binding positions include D34, 55-59, R63, R78, R86, and K102; that span reads NVRDG. A Mg(2+)-binding site is contributed by D125.

As to quaternary structure, homotetramer. The cofactor is Mg(2+). Requires Co(2+) as cofactor.

The catalysed reaction is 3-deoxy-alpha-D-manno-2-octulosonate-8-phosphate + H2O = 3-deoxy-alpha-D-manno-oct-2-ulosonate + phosphate. It functions in the pathway carbohydrate biosynthesis; 3-deoxy-D-manno-octulosonate biosynthesis; 3-deoxy-D-manno-octulosonate from D-ribulose 5-phosphate: step 3/3. It participates in bacterial outer membrane biogenesis; lipopolysaccharide biosynthesis. With respect to regulation, inhibited by calcium, cadmium, mercury, and copper ions. Functionally, catalyzes the hydrolysis of 3-deoxy-D-manno-octulosonate 8-phosphate (KDO 8-P) to 3-deoxy-D-manno-octulosonate (KDO) and inorganic phosphate. In Escherichia coli (strain B / BL21-DE3), this protein is 3-deoxy-D-manno-octulosonate 8-phosphate phosphatase KdsC.